The sequence spans 255 residues: Triosephosphate isomerase (255 aa).

9–11 (NWK) serves as a coordination point for substrate. Catalysis depends on H95, which acts as the Electrophile. The active-site Proton acceptor is E167. Substrate contacts are provided by residues G173, S212, and 233–234 (GG).

Belongs to the triosephosphate isomerase family. In terms of assembly, homodimer.

It localises to the cytoplasm. The catalysed reaction is D-glyceraldehyde 3-phosphate = dihydroxyacetone phosphate. It functions in the pathway carbohydrate biosynthesis; gluconeogenesis. Its pathway is carbohydrate degradation; glycolysis; D-glyceraldehyde 3-phosphate from glycerone phosphate: step 1/1. In terms of biological role, involved in the gluconeogenesis. Catalyzes stereospecifically the conversion of dihydroxyacetone phosphate (DHAP) to D-glyceraldehyde-3-phosphate (G3P). The sequence is that of Triosephosphate isomerase from Salmonella agona (strain SL483).